Here is a 411-residue protein sequence, read N- to C-terminus: Dihydrolipoyllysine-residue succinyltransferase component of 2-oxoglutarate dehydrogenase complex (411 aa).

In terms of domain architecture, Lipoyl-binding spans 2-77 (TTEIRVPTLG…EVNALLGAVE (76 aa)). Lysine 43 carries the post-translational modification N6-lipoyllysine. Low complexity predominate over residues 82-100 (SVAKSPSSSETSVSAAPSE). The interval 82-115 (SVAKSPSSSETSVSAAPSELEQSSSSNTMPPAPS) is disordered. Over residues 101–110 (LEQSSSSNTM) the composition is skewed to polar residues. The Peripheral subunit-binding (PSBD) domain maps to 111–148 (PPAPSAAKLMAENNIAKSDILGSGKRGQILKEDVLNVL). Residues histidine 382 and aspartate 386 contribute to the active site.

Belongs to the 2-oxoacid dehydrogenase family. In terms of assembly, forms a 24-polypeptide structural core with octahedral symmetry. Part of the 2-oxoglutarate dehydrogenase (OGDH) complex composed of E1 (2-oxoglutarate dehydrogenase), E2 (dihydrolipoamide succinyltransferase) and E3 (dihydrolipoamide dehydrogenase); the complex contains multiple copies of the three enzymatic components (E1, E2 and E3). (R)-lipoate is required as a cofactor.

It carries out the reaction N(6)-[(R)-dihydrolipoyl]-L-lysyl-[protein] + succinyl-CoA = N(6)-[(R)-S(8)-succinyldihydrolipoyl]-L-lysyl-[protein] + CoA. Its pathway is amino-acid degradation; L-lysine degradation via saccharopine pathway; glutaryl-CoA from L-lysine: step 6/6. In terms of biological role, E2 component of the 2-oxoglutarate dehydrogenase (OGDH) complex which catalyzes the second step in the conversion of 2-oxoglutarate to succinyl-CoA and CO(2). This is Dihydrolipoyllysine-residue succinyltransferase component of 2-oxoglutarate dehydrogenase complex (sucB) from Bartonella vinsonii subsp. berkhoffii.